A 238-amino-acid chain; its full sequence is uncharacterized protein (238 aa).

Positions 1 to 20 (MPNLHSLPLGTRPENAIRNN) are disordered.

The protein belongs to the PEP2 family.

This is an uncharacterized protein from Emericella nidulans (strain FGSC A4 / ATCC 38163 / CBS 112.46 / NRRL 194 / M139) (Aspergillus nidulans).